We begin with the raw amino-acid sequence, 633 residues long: Pescadillo homolog (633 aa).

The BRCT domain maps to 321-414 (RLRTLFKGLK…QLLPTNKYFL (94 aa)). 2 disordered regions span residues 450-470 (HAQSEDESEDDAAAEEEDTVE) and 490-567 (KKYG…LQAR). 2 positions are modified to phosphoserine: S453 and S457. Composition is skewed to acidic residues over residues 454–470 (EDESEDDAAAEEEDTVE) and 498–526 (VNEDEEDSDEEDFDGEEQESDDDDEEELD). The span at 527–538 (EKEKRLLEEKQK) shows a compositional bias: basic and acidic residues. A compositionally biased stretch (basic residues) spans 545–554 (KVHKVNKRQV). A compositionally biased stretch (basic and acidic residues) spans 555 to 564 (HKAEVDEHRL). Residues 593–626 (LLRKKRRTIETDAKEAKKLAKREARKAAAAAAAA) are a coiled coil.

This sequence belongs to the pescadillo family.

It is found in the nucleus. It localises to the nucleolus. Its subcellular location is the nucleoplasm. Functionally, required for maturation of ribosomal RNAs and formation of the large ribosomal subunit. The polypeptide is Pescadillo homolog (Drosophila virilis (Fruit fly)).